A 155-amino-acid polypeptide reads, in one-letter code: Protein SprT-like (155 aa).

A SprT-like domain is found at 7 to 145; sequence QRHMEEVSLQ…GSCGGKLIQI (139 aa). H67 is a binding site for Zn(2+). The active site involves E68. H71 serves as a coordination point for Zn(2+).

The protein belongs to the SprT family. It depends on Zn(2+) as a cofactor.

It localises to the cytoplasm. This is Protein SprT-like from Listeria monocytogenes serotype 4a (strain HCC23).